Here is a 40-residue protein sequence, read N- to C-terminus: Sarcotoxin-1D (40 aa).

This sequence belongs to the cecropin family.

It localises to the secreted. Its function is as follows. Sarcotoxins, which are potent bactericidal proteins, are produced in response to injury. They are cytotoxic to both Gram-positive and Gram-negative bacteria. The polypeptide is Sarcotoxin-1D (Sarcophaga peregrina (Flesh fly)).